The chain runs to 307 residues: Fructokinase (307 aa).

The protein belongs to the carbohydrate kinase PfkB family.

It catalyses the reaction D-fructose + ATP = D-fructose 6-phosphate + ADP + H(+). The protein is Fructokinase (scrK) of Vibrio alginolyticus.